Consider the following 33-residue polypeptide: ALWKTMLKKLGTVALHAGKAALGAAADTISQGA.

Ala33 is modified (alanine amide).

As to expression, expressed by the parotoid glands.

The protein localises to the secreted. Functionally, possesses a potent antimicrobial activity against bacteria, fungi and protozoa. Probably acts by disturbing membrane functions with its amphipathic structure. The sequence is that of Dermaseptin DS VIII-like peptide from Phyllomedusa burmeisteri (Brazilian common walking leaf frog).